The sequence spans 764 residues: 5-methyltetrahydropteroyltriglutamate--homocysteine methyltransferase (764 aa).

5-methyltetrahydropteroyltri-L-glutamate contacts are provided by residues 19–22 (RELK) and lysine 113. L-homocysteine-binding positions include 435–437 (IGS) and glutamate 488. Residues 435-437 (IGS) and glutamate 488 each bind L-methionine. Residues 519–520 (RC) and tryptophan 565 each bind 5-methyltetrahydropteroyltri-L-glutamate. Aspartate 603 contacts L-homocysteine. Aspartate 603 provides a ligand contact to L-methionine. Glutamate 609 is a 5-methyltetrahydropteroyltri-L-glutamate binding site. Zn(2+) is bound by residues histidine 645, cysteine 647, and glutamate 669. The active-site Proton donor is the histidine 698. Zn(2+) is bound at residue cysteine 730.

This sequence belongs to the vitamin-B12 independent methionine synthase family. It depends on Zn(2+) as a cofactor.

It carries out the reaction 5-methyltetrahydropteroyltri-L-glutamate + L-homocysteine = tetrahydropteroyltri-L-glutamate + L-methionine. It functions in the pathway amino-acid biosynthesis; L-methionine biosynthesis via de novo pathway; L-methionine from L-homocysteine (MetE route): step 1/1. Functionally, catalyzes the transfer of a methyl group from 5-methyltetrahydrofolate to homocysteine resulting in methionine formation. This is 5-methyltetrahydropteroyltriglutamate--homocysteine methyltransferase from Desulforamulus reducens (strain ATCC BAA-1160 / DSM 100696 / MI-1) (Desulfotomaculum reducens).